We begin with the raw amino-acid sequence, 380 residues long: Succinyl-diaminopimelate desuccinylase (380 aa).

Residue His-70 coordinates Zn(2+). The active site involves Asp-72. Asp-103 contacts Zn(2+). The active-site Proton acceptor is Glu-137. Positions 138, 166, and 352 each coordinate Zn(2+).

The protein belongs to the peptidase M20A family. DapE subfamily. In terms of assembly, homodimer. Zn(2+) serves as cofactor. It depends on Co(2+) as a cofactor.

The catalysed reaction is N-succinyl-(2S,6S)-2,6-diaminopimelate + H2O = (2S,6S)-2,6-diaminopimelate + succinate. Its pathway is amino-acid biosynthesis; L-lysine biosynthesis via DAP pathway; LL-2,6-diaminopimelate from (S)-tetrahydrodipicolinate (succinylase route): step 3/3. Catalyzes the hydrolysis of N-succinyl-L,L-diaminopimelic acid (SDAP), forming succinate and LL-2,6-diaminopimelate (DAP), an intermediate involved in the bacterial biosynthesis of lysine and meso-diaminopimelic acid, an essential component of bacterial cell walls. This is Succinyl-diaminopimelate desuccinylase from Azoarcus sp. (strain BH72).